A 274-amino-acid polypeptide reads, in one-letter code: Secreted RxLR effector protein 144 (274 aa).

Positions 1 to 20 are cleaved as a signal peptide; sequence MRPWLLLLVGLSSFFALSTS. A RxLR-dEER motif is present at residues 49–72; sequence RKLRAFGGDTNTLKDSGKARREEK.

This sequence belongs to the RxLR effector family.

The protein localises to the secreted. It is found in the host nucleus. The protein resides in the host cytoplasm. In terms of biological role, secreted effector that completely suppresses the host cell death induced by cell death-inducing proteins. This chain is Secreted RxLR effector protein 144, found in Plasmopara viticola (Downy mildew of grapevine).